A 392-amino-acid polypeptide reads, in one-letter code: Putative glutamate--cysteine ligase 2 (392 aa).

Residues 1–21 (MMPVSGWRAVSSAPASSSAGR) are disordered. Residues 9-19 (AVSSAPASSSA) show a composition bias toward low complexity.

The protein belongs to the glutamate--cysteine ligase type 2 family. YbdK subfamily.

It catalyses the reaction L-cysteine + L-glutamate + ATP = gamma-L-glutamyl-L-cysteine + ADP + phosphate + H(+). Its function is as follows. ATP-dependent carboxylate-amine ligase which exhibits weak glutamate--cysteine ligase activity. The chain is Putative glutamate--cysteine ligase 2 from Mycobacterium ulcerans (strain Agy99).